We begin with the raw amino-acid sequence, 509 residues long: Heat shock 70 kDa protein 14-A (509 aa).

This sequence belongs to the heat shock protein 70 family. As to quaternary structure, component of ribosome-associated complex (RAC).

The protein localises to the cytoplasm. It is found in the cytosol. Functionally, component of the ribosome-associated complex (RAC), a complex involved in folding or maintaining nascent polypeptides in a folding-competent state. This is Heat shock 70 kDa protein 14-A (hspa14-a) from Xenopus laevis (African clawed frog).